The following is a 173-amino-acid chain: ATP-dependent protease subunit HslV (173 aa).

T2 is a catalytic residue. Na(+) is bound by residues G158, D161, and S164.

This sequence belongs to the peptidase T1B family. HslV subfamily. A double ring-shaped homohexamer of HslV is capped on each side by a ring-shaped HslU homohexamer. The assembly of the HslU/HslV complex is dependent on binding of ATP.

It is found in the cytoplasm. The enzyme catalyses ATP-dependent cleavage of peptide bonds with broad specificity.. Allosterically activated by HslU binding. Functionally, protease subunit of a proteasome-like degradation complex believed to be a general protein degrading machinery. The polypeptide is ATP-dependent protease subunit HslV (Actinobacillus pleuropneumoniae serotype 5b (strain L20)).